A 142-amino-acid polypeptide reads, in one-letter code: Glia maturation factor beta (142 aa).

The residue at position 2 (Ser2) is an N-acetylserine. Positions 4-139 constitute an ADF-H domain; the sequence is SLVVCDVAED…TEEWLREKLG (136 aa).

The protein belongs to the actin-binding proteins ADF family. GMF subfamily. In terms of processing, phosphorylated; stimulated by phorbol ester.

Functionally, this protein causes differentiation of brain cells, stimulation of neural regeneration, and inhibition of proliferation of tumor cells. The protein is Glia maturation factor beta (Gmfb) of Mus musculus (Mouse).